The primary structure comprises 69 residues: MPLEVDELRKMDLKQLKERLNELEMQLLKLRVESRMGTLKNTASIKNTRKDIARILTVIGEKSKKEAKK.

It belongs to the universal ribosomal protein uL29 family.

The protein is Large ribosomal subunit protein uL29 of Sulfolobus acidocaldarius (strain ATCC 33909 / DSM 639 / JCM 8929 / NBRC 15157 / NCIMB 11770).